Reading from the N-terminus, the 322-residue chain is Thioredoxin reductase (322 aa).

FAD contacts are provided by residues 12–15 (SGPA), 34–42 (EGAVTAGGA), asparagine 51, and valine 84. A disulfide bond links cysteine 136 and cysteine 139. Residues histidine 176, arginine 182, isoleucine 239, and tyrosine 259 each contribute to the NADP(+) site. Residues aspartate 279 and 286 to 289 (RQAI) each bind FAD. An NADP(+)-binding site is contributed by arginine 286.

It belongs to the class-II pyridine nucleotide-disulfide oxidoreductase family. In terms of assembly, homodimer. FAD serves as cofactor.

The protein resides in the cytoplasm. It catalyses the reaction [thioredoxin]-dithiol + NADP(+) = [thioredoxin]-disulfide + NADPH + H(+). In Streptomyces coelicolor (strain ATCC BAA-471 / A3(2) / M145), this protein is Thioredoxin reductase.